Reading from the N-terminus, the 242-residue chain is Probable transcriptional regulatory protein STH1004 (242 aa).

The protein belongs to the TACO1 family.

It is found in the cytoplasm. The protein is Probable transcriptional regulatory protein STH1004 of Symbiobacterium thermophilum (strain DSM 24528 / JCM 14929 / IAM 14863 / T).